We begin with the raw amino-acid sequence, 399 residues long: Acetate kinase (399 aa).

N8 lines the Mg(2+) pocket. K15 is a binding site for ATP. Position 89 (R89) interacts with substrate. The active-site Proton donor/acceptor is D146. Residues 206 to 210, 283 to 285, and 331 to 335 each bind ATP; these read HVGNG, DMR, and GMGEN. Mg(2+) is bound at residue E383.

It belongs to the acetokinase family. As to quaternary structure, homodimer. It depends on Mg(2+) as a cofactor. Mn(2+) serves as cofactor.

It is found in the cytoplasm. It catalyses the reaction acetate + ATP = acetyl phosphate + ADP. It functions in the pathway metabolic intermediate biosynthesis; acetyl-CoA biosynthesis; acetyl-CoA from acetate: step 1/2. Catalyzes the formation of acetyl phosphate from acetate and ATP. Can also catalyze the reverse reaction. The sequence is that of Acetate kinase from Streptococcus equi subsp. equi (strain 4047).